Here is a 121-residue protein sequence, read N- to C-terminus: Large ribosomal subunit protein uL14c (121 aa).

Belongs to the universal ribosomal protein uL14 family. Part of the 50S ribosomal subunit.

Its subcellular location is the plastid. The protein localises to the chloroplast. Its function is as follows. Binds to 23S rRNA. The chain is Large ribosomal subunit protein uL14c from Trieres chinensis (Marine centric diatom).